The sequence spans 501 residues: Lysine--tRNA ligase (501 aa).

Residues glutamate 412 and glutamate 419 each contribute to the Mg(2+) site.

The protein belongs to the class-II aminoacyl-tRNA synthetase family. Homodimer. Mg(2+) is required as a cofactor.

Its subcellular location is the cytoplasm. The catalysed reaction is tRNA(Lys) + L-lysine + ATP = L-lysyl-tRNA(Lys) + AMP + diphosphate. The chain is Lysine--tRNA ligase from Chlorobium luteolum (strain DSM 273 / BCRC 81028 / 2530) (Pelodictyon luteolum).